The sequence spans 192 residues: CASP-like protein 1E1 (192 aa).

A disordered region spans residues 1–22 (MDSQNKNSVDAMDGIESRGMKE). The Cytoplasmic portion of the chain corresponds to 1-29 (MDSQNKNSVDAMDGIESRGMKERGGRTNS). A helical transmembrane segment spans residues 30-50 (FLVLRVLAFVLTSTAAIVHGV). Topologically, residues 51–81 (NNQTETVPIQLTSSMPPLYVPVVAKWHYLSA) are extracellular. Asparagine 52 carries an N-linked (GlcNAc...) asparagine glycan. The chain crosses the membrane as a helical span at residues 82–102 (FVFFVVSNAIACSYAAISVML). Residues 103–118 (SFCGKKSMVPIILTLD) lie on the Cytoplasmic side of the membrane. The chain crosses the membrane as a helical span at residues 119 to 139 (LLMVALLFSSNGAATAIGVMG). Residues 140–161 (YKGNSHVKWNKVCNVFGKFCNQ) are Extracellular-facing. A helical transmembrane segment spans residues 162–182 (VAASVVLSLIGSIVFVLLVML). The Cytoplasmic portion of the chain corresponds to 183–192 (TAFRLHNKSK).

The protein belongs to the Casparian strip membrane proteins (CASP) family. Homodimer and heterodimers.

The protein resides in the cell membrane. This Ricinus communis (Castor bean) protein is CASP-like protein 1E1.